The sequence spans 1270 residues: DNA-directed RNA polymerase subunit beta (1270 aa).

This sequence belongs to the RNA polymerase beta chain family. As to quaternary structure, the RNAP catalytic core consists of 2 alpha, 1 beta, 1 beta' and 1 omega subunit. When a sigma factor is associated with the core the holoenzyme is formed, which can initiate transcription.

It catalyses the reaction RNA(n) + a ribonucleoside 5'-triphosphate = RNA(n+1) + diphosphate. Functionally, DNA-dependent RNA polymerase catalyzes the transcription of DNA into RNA using the four ribonucleoside triphosphates as substrates. This chain is DNA-directed RNA polymerase subunit beta, found in Christiangramia forsetii (strain DSM 17595 / CGMCC 1.15422 / KT0803) (Gramella forsetii).